The chain runs to 588 residues: 2-isopropylmalate synthase (588 aa).

In terms of domain architecture, Pyruvate carboxyltransferase spans 40-314 (PRWCAVDLRD…DPQIDFSDLD (275 aa)). Mg(2+)-binding residues include D49, H253, H255, and N289. Residues 456-588 (APLDRVEEKW…TVREPELAAV (133 aa)) form a regulatory domain region.

Belongs to the alpha-IPM synthase/homocitrate synthase family. LeuA type 2 subfamily. Homodimer. It depends on Mg(2+) as a cofactor.

It is found in the cytoplasm. It carries out the reaction 3-methyl-2-oxobutanoate + acetyl-CoA + H2O = (2S)-2-isopropylmalate + CoA + H(+). It functions in the pathway amino-acid biosynthesis; L-leucine biosynthesis; L-leucine from 3-methyl-2-oxobutanoate: step 1/4. Functionally, catalyzes the condensation of the acetyl group of acetyl-CoA with 3-methyl-2-oxobutanoate (2-ketoisovalerate) to form 3-carboxy-3-hydroxy-4-methylpentanoate (2-isopropylmalate). The chain is 2-isopropylmalate synthase from Clavibacter michiganensis subsp. michiganensis (strain NCPPB 382).